Consider the following 77-residue polypeptide: Serine protease inhibitor 1 (77 aa).

Positions 1 to 17 (MMFTPLIVLTLLVLATA) are cleaved as a signal peptide. 5 cysteine pairs are disulfide-bonded: Cys-21–Cys-53, Cys-30–Cys-48, Cys-33–Cys-44, Cys-37–Cys-74, and Cys-55–Cys-68. A TIL domain is found at 21-74 (CGPNEQWSDCPGCELQCGESDKPCPAMCGDPKCYCSPDQYRRIPDGRCIRKIQC).

It localises to the secreted. Defends the organism against the host's proteinases. The polypeptide is Serine protease inhibitor 1 (Anisakis simplex (Herring worm)).